The sequence spans 402 residues: MDQPAPAPEPMLLDAQPPAAVACDKKQQEGEAPYAEGNDAVTGHIISTTIGGKNGEPKRTISYMAERVVGTGSFGIVFQAKCLETGETVAIKKVLQDRRYKNRELQLMRAMDHPNVISLKHCFFSTTSRDELFLNLVMEYVPETLYRVLKHYSNANHRMPLIYVKLYMYQLFRGLAYIHTVPGVCHRDVKPQNVLVDPLTHQVKLCDFGSAKTLVPGEPNISYICSRYYRAPELIFGATEYTTSIDIWSAGCVLAELLLGQPLFPGESAVDQLVEIIKVLGTPTREEIRCMNPNYTEFRFPQIKAHPWHKVFHKRMPPEAIDLASRLLQYSPSLRCTALDACAHPFFDELREPNARLPNGRPFPPLFNFKHELANSSQELISRLIPEHVRRQATHNFFNTGS.

Positions 1 to 38 (MDQPAPAPEPMLLDAQPPAAVACDKKQQEGEAPYAEGN) are disordered. A Protein kinase domain is found at 63-347 (YMAERVVGTG…ALDACAHPFF (285 aa)). ATP-binding positions include 69–77 (VGTGSFGIV) and Lys92. Asp188 acts as the Proton acceptor in catalysis.

Belongs to the protein kinase superfamily. CMGC Ser/Thr protein kinase family. GSK-3 subfamily. Interacts with DLT. Interacts with OFP8. Interacts with GRF4. Interacts with PUB24. Interacts with SMOS1. Autophosphorylated. In terms of tissue distribution, expressed in lamina joints, vascular tissue and nodes.

The protein resides in the cytoplasm. It localises to the nucleus. The enzyme catalyses L-seryl-[protein] + ATP = O-phospho-L-seryl-[protein] + ADP + H(+). It catalyses the reaction L-threonyl-[protein] + ATP = O-phospho-L-threonyl-[protein] + ADP + H(+). In terms of biological role, serine-threonine kinase that acts as a negative regulator of brassinosteroid (BR) signaling. Phosphorylates DLT and BZR1, two positive regulators that mediates several BR responses. Phosphorylation of DLT and BZR1 inhibits their activities in BR signaling. Phosphorylates OFP8, a positive regulator of BR responses. Phosphorylated OFP8 shuttles from the nucleus to the cytoplasm where it is degraded by the proteasome. Phosphorylates the E3 ubiquitin-protein ligase PUB24, a negative regulator of BR signaling, which targets BZR1 and promotes its degradation via the 26S proteasome. Phosphorylation of PUB24 increases its stability. Phosphorylates the AP2-ERF transcription factor SMOS1, a positive regulator of BR signaling, which cooperatively functions in a transactivating complex with BZR1 to enhance the transcription of BR biosynthetic genes. Phosphorylation of SMOS1 leads to its degradation by an unknown mechanism. This is Shaggy-related protein kinase GSK2 from Oryza sativa subsp. japonica (Rice).